The following is a 1440-amino-acid chain: ABC transporter G family member 46 (1440 aa).

Residues 1 to 42 form a disordered region; it reads MDDDVDAGEIYAVDRQREEGSASAAAFSRSPSTGRVDDDDDD. Low complexity predominate over residues 21–32; sequence SASAAAFSRSPS. The ABC transporter 1 domain occupies 137–419; that stretch reads ANTLHMTTRS…FKSLGFKCLE (283 aa). Position 170–177 (170–177) interacts with ATP; sequence GSPGSGKT. The ABC transmembrane type-2 1 domain maps to 497–710; that stretch reads KILKANIDRE…ALNALAVNEF (214 aa). A run of 7 helical transmembrane segments spans residues 516–536, 561–581, 603–623, 634–654, 659–679, 688–708, and 745–765; these read LYIF…SVFI, AIMF…PVFF, TPIS…VIGF, FLVL…IAAL, VVAS…SGFI, WLIW…LAVN, and IGLG…TICL. The interval 794–829 is disordered; the sequence is DQEPSSGGRVTNDKRYTEGGNNDEATSSNANHNSSP. Residues 812 to 829 are compositionally biased toward polar residues; sequence GGNNDEATSSNANHNSSP. The ABC transporter 2 domain maps to 843-1095; sequence MTFEDIRYSI…ELIKYFESIE (253 aa). 888 to 895 lines the ATP pocket; it reads GISGAGKT. In terms of domain architecture, ABC transmembrane type-2 2 spans 1168 to 1382; that stretch reads IQCLACLWKQ…TINGLVTSQF (215 aa). 7 helical membrane-spanning segments follow: residues 1188-1208, 1219-1236, 1271-1291, 1302-1322, 1332-1352, 1357-1377, and 1410-1430; these read IAVN…MFWG, LLSA…LGVQ, VVVE…IVYS, FFWY…YGMM, MSSI…GFLI, IPIW…INGL, and LWVA…LFGF.

Belongs to the ABC transporter superfamily. ABCG family. PDR (TC 3.A.1.205) subfamily.

Its subcellular location is the membrane. Its function is as follows. May be a general defense protein. In Oryza sativa subsp. japonica (Rice), this protein is ABC transporter G family member 46.